The sequence spans 342 residues: tRNA dimethylallyltransferase (342 aa).

Residue 39–46 (GPTGSGKT) coordinates ATP. 41–46 (TGSGKT) provides a ligand contact to substrate. An interaction with substrate tRNA region spans residues 64–67 (DSMQ).

It belongs to the IPP transferase family. In terms of assembly, monomer. It depends on Mg(2+) as a cofactor.

The catalysed reaction is adenosine(37) in tRNA + dimethylallyl diphosphate = N(6)-dimethylallyladenosine(37) in tRNA + diphosphate. Its function is as follows. Catalyzes the transfer of a dimethylallyl group onto the adenine at position 37 in tRNAs that read codons beginning with uridine, leading to the formation of N6-(dimethylallyl)adenosine (i(6)A). This Chlamydia pneumoniae (Chlamydophila pneumoniae) protein is tRNA dimethylallyltransferase.